Here is an 821-residue protein sequence, read N- to C-terminus: Spindle apparatus protein lin-5 (821 aa).

Residues 161–199 (EASSGFRTPKRNNYSLTSLQTPTATARRLRTASSTARRS) are disordered. Residues 162 to 180 (ASSGFRTPKRNNYSLTSLQ) show a composition bias toward polar residues. A compositionally biased stretch (low complexity) spans 181 to 199 (TPTATARRLRTASSTARRS). Residues 211–634 (KFMRSERELK…REKESAEIKK (424 aa)) adopt a coiled-coil conformation. 2 disordered regions span residues 736-758 (RSES…FTPS) and 779-821 (LKCS…SKKQ).

In terms of assembly, interacts with gpr-1; gpr-1 forms a complex with gpr-2 and GDP-bound goa-1.

It localises to the cytoplasm. The protein resides in the cell cortex. It is found in the cytoskeleton. The protein localises to the spindle. Its subcellular location is the chromosome. It localises to the centromere. The protein resides in the kinetochore. It is found in the microtubule organizing center. The protein localises to the centrosome. In terms of biological role, essential component of the spindle apparatus required for spindle positioning and chromosome movement. Acts to recruit or anchor gpr-1/gpr-2 complex to the spindle and cortex. Also involved, directly or indirectly, in cytokinesis and in the coupling of DNA replication, centrosome duplication and mitotic division. The sequence is that of Spindle apparatus protein lin-5 (lin-5) from Caenorhabditis elegans.